The primary structure comprises 432 residues: Lecithin-cholesterol acyltransferase-like 1 (432 aa).

Residues 7–29 (HYSVVIAILVVVTMTSMCQAVGS) form a helical membrane-spanning segment. Residue Ser209 is the Acyl-ester intermediate of the active site. Residues Asp374 and His400 each act as charge relay system in the active site.

It belongs to the AB hydrolase superfamily. Lipase family.

The protein localises to the membrane. This is Lecithin-cholesterol acyltransferase-like 1 (LCAT1) from Arabidopsis thaliana (Mouse-ear cress).